The chain runs to 328 residues: MIDRIWFGHSRLYLLLLPFSWLYGLITWLIRLSYRSGLRVAWRSPIPIVVVGNLTVGGNGKTPIVIWLVEQLKKRGLQVGVVSRGYSGKSGKYPLILSHHTQPEEAGDEPVVIFQRTGVPVAVAPKRKEAIRALLKKHPLDLLIADDGLQHYALKRDFELVVIDGIRRFGNACLLPAGPMRENITRLHSVDAIIINGGEAQKEEILMQLRPSQAVNLVTGEKKPVEELISVIAMAGIGHPDRFFMMLAQLGVNIIKTQIFSDHQHYTLSTLLPLAKKTQSLCMTEKDAVKCKAFAQPNWWYLPVSADFPFVQSQKLLASIEALCHRIC.

55-62 (TVGGNGKT) provides a ligand contact to ATP.

The protein belongs to the LpxK family.

It carries out the reaction a lipid A disaccharide + ATP = a lipid IVA + ADP + H(+). The protein operates within glycolipid biosynthesis; lipid IV(A) biosynthesis; lipid IV(A) from (3R)-3-hydroxytetradecanoyl-[acyl-carrier-protein] and UDP-N-acetyl-alpha-D-glucosamine: step 6/6. Functionally, transfers the gamma-phosphate of ATP to the 4'-position of a tetraacyldisaccharide 1-phosphate intermediate (termed DS-1-P) to form tetraacyldisaccharide 1,4'-bis-phosphate (lipid IVA). The protein is Tetraacyldisaccharide 4'-kinase of Hamiltonella defensa subsp. Acyrthosiphon pisum (strain 5AT).